The sequence spans 37 residues: Esculentin-2L (37 aa).

Cysteine 31 and cysteine 37 are joined by a disulfide.

As to expression, expressed by the skin glands.

Its subcellular location is the secreted. Functionally, antibacterial activity against Gram-positive bacterium S.aureus and Gram-negative bacterium E.coli. Has activity against C.albicans. This Rana luteiventris (Columbia spotted frog) protein is Esculentin-2L.